Reading from the N-terminus, the 246-residue chain is Phosphomannomutase 2 (246 aa).

The residue at position 2 (alanine 2) is an N-acetylalanine. The Nucleophile role is filled by aspartate 12. Positions 12 and 14 each coordinate Mg(2+). Aspartate 14 functions as the Proton donor/acceptor in the catalytic mechanism. Residues arginine 21, arginine 123, arginine 134, and arginine 141 each contribute to the alpha-D-mannose 1-phosphate site. An N6-acetyllysine modification is found at lysine 149. Alpha-D-mannose 1-phosphate is bound by residues serine 179 and aspartate 181. Mg(2+)-binding residues include aspartate 209, phenylalanine 221, aspartate 223, and threonine 226.

The protein belongs to the eukaryotic PMM family. Homodimer.

It localises to the cytoplasm. The enzyme catalyses alpha-D-mannose 1-phosphate = D-mannose 6-phosphate. The protein operates within nucleotide-sugar biosynthesis; GDP-alpha-D-mannose biosynthesis; alpha-D-mannose 1-phosphate from D-fructose 6-phosphate: step 2/2. In terms of biological role, involved in the synthesis of the GDP-mannose and dolichol-phosphate-mannose required for a number of critical mannosyl transfer reactions. This is Phosphomannomutase 2 (PMM2) from Macaca fascicularis (Crab-eating macaque).